A 421-amino-acid polypeptide reads, in one-letter code: 4-aminobutyrate aminotransferase PuuE (421 aa).

Pyridoxal 5'-phosphate contacts are provided by residues 110-111 (GA) and 238-241 (DEVQ). The residue at position 267 (K267) is an N6-(pyridoxal phosphate)lysine. Pyridoxal 5'-phosphate is bound at residue T296.

Belongs to the class-III pyridoxal-phosphate-dependent aminotransferase family. The cofactor is pyridoxal 5'-phosphate.

It carries out the reaction 4-aminobutanoate + 2-oxoglutarate = succinate semialdehyde + L-glutamate. It participates in amine and polyamine degradation; putrescine degradation; succinate semialdehyde from 4-aminobutanoate. Completely inhibited by succinate and low-aeration conditions. Functionally, catalyzes the transfer of the amino group from gamma-aminobutyrate (GABA) to alpha-ketoglutarate (KG) to yield succinic semialdehyde (SSA). PuuE is important for utilization of putrescine as the sole nitrogen or carbon source. The polypeptide is 4-aminobutyrate aminotransferase PuuE (puuE) (Escherichia coli (strain K12)).